Consider the following 501-residue polypeptide: Actin nucleation-promoting factor WASL (501 aa).

S2 is subject to N-acetylserine. The WH1 domain occupies 31–138 (LGKKCVTMSS…KAVTDLLGRR (108 aa)). Disordered regions lie at residues 135–158 (LGRR…PMAT) and 180–202 (SHTK…DIGT). Residues 183 to 195 (KEKKKGKAKKKRL) show a composition bias toward basic residues. A CRIB domain is found at 200–213 (IGTPSNFQHIGHVG). At S239 the chain carries Phosphoserine; by TNK2. Y253 carries the post-translational modification Phosphotyrosine; by FAK1 and TNK2. Disordered regions lie at residues 263-405 (EAVK…KAAL) and 442-501 (QLKS…EWED). 2 stretches are compositionally biased toward pro residues: residues 273–361 (APPP…PPPL) and 368–387 (APPP…PPGL). R304 bears the Omega-N-methylarginine mark. WH2 domains are found at residues 401–418 (NKAA…LKKV) and 429–446 (GRDA…LKSV). Residues 442–453 (QLKSVSDGQEST) are compositionally biased toward polar residues. Phosphoserine occurs at positions 480 and 481. The span at 482-501 (DEDEDDDDEEDFQDDDEWED) shows a compositional bias: acidic residues.

Binds actin and the Arp2/3 complex. Interacts with CDC42. Interacts with FCHSD1. Interacts with FCHSD2. Binds to SH3 domains of GRB2. Interacts with the C-terminal SH3 domain of DNMBP. Interacts with SNX9. Interacts with the WW domains of PRPF40A/FBP11. Interacts with PTK2/FAK1. Interacts with PACSIN1, PACSIN2 and PACSIN3. Interacts with NOSTRIN. Binds to TNK2. Interacts with SNX33. Interacts with NONO (via second RRM domain); the interaction is direct. Component of a multiprotein complex with NONO and SFPQ; associates with the complex via direct interaction with NONO. Phosphorylation at Ser-239, Tyr-253, Ser-480 and Ser-481 enhances actin polymerization activity.

The protein resides in the cytoplasm. The protein localises to the cytoskeleton. It localises to the nucleus. In terms of biological role, regulates actin polymerization by stimulating the actin-nucleating activity of the Arp2/3 complex. Involved in various processes, such as mitosis and cytokinesis, via its role in the regulation of actin polymerization. Together with CDC42, involved in the extension and maintenance of the formation of thin, actin-rich surface projections called filopodia. In addition to its role in the cytoplasm, also plays a role in the nucleus by regulating gene transcription, probably by promoting nuclear actin polymerization. Binds to HSF1/HSTF1 and forms a complex on heat shock promoter elements (HSE) that negatively regulates HSP90 expression. Plays a role in dendrite spine morphogenesis. The chain is Actin nucleation-promoting factor WASL (Wasl) from Rattus norvegicus (Rat).